The following is a 98-amino-acid chain: uncharacterized protein (98 aa).

Over residues 19-31 (RRMSKRSKNKAKK) the composition is skewed to basic residues. Residues 19 to 47 (RRMSKRSKNKAKKERVPVEDRPPTPMPTS) form a disordered region.

This sequence belongs to the lymphocryptovirus BNLF2B family.

This is an uncharacterized protein from Epstein-Barr virus (strain AG876) (HHV-4).